A 537-amino-acid chain; its full sequence is Spore coat protein SP70 (537 aa).

An N-terminal signal peptide occupies residues 1–20 (MRILKLAALSCLLFIAPSLS). In terms of domain architecture, DSCP-N spans 21 to 140 (INCDGLSKDQ…CQIPATGGGP (120 aa)). Asparagine 97 carries an N-linked (GlcNAc...) asparagine glycan. One can recognise a Follistatin-like 1 domain in the interval 157-179 (SCDKVNCPNGYICTIVNQLAVCV). A disordered region spans residues 183–246 (SSSSSSSSTT…GSHTTTGGST (64 aa)). Follistatin-like domains follow at residues 250 to 272 (TCGN…AVCV), 278 to 296 (SCAN…GECI), 358 to 380 (TCKT…PTCV), and 389 to 415 (TCKD…EECC).

Post-translationally, phosphorylated and fucosylated.

This is Spore coat protein SP70 (cotB) from Dictyostelium discoideum (Social amoeba).